The sequence spans 117 residues: uncharacterized protein (117 aa).

The segment covering 1–19 (MTSNPSSSADQPLSGTTVP) has biased composition (polar residues). A disordered region spans residues 1-28 (MTSNPSSSADQPLSGTTVPGSVPGKAPE). A run of 2 helical transmembrane segments spans residues 38 to 58 (AAVW…LIFI) and 76 to 96 (LPLG…TVFA).

The protein resides in the cell membrane. This is an uncharacterized protein from Mycobacterium tuberculosis (strain ATCC 25618 / H37Rv).